Here is a 79-residue protein sequence, read N- to C-terminus: UPF0154 protein SAG1601 (79 aa).

The helical transmembrane segment at 5 to 25 (IWILLIIVALFGGLVGGIFIA) threads the bilayer.

The protein belongs to the UPF0154 family.

It localises to the membrane. The polypeptide is UPF0154 protein SAG1601 (Streptococcus agalactiae serotype V (strain ATCC BAA-611 / 2603 V/R)).